The sequence spans 262 residues: Phosphonates import ATP-binding protein PhnC (262 aa).

An ABC transporter domain is found at Ile-5–Asn-253. An ATP-binding site is contributed by Gly-37–Ser-44.

The protein belongs to the ABC transporter superfamily. Phosphonates importer (TC 3.A.1.9.1) family. As to quaternary structure, the complex is composed of two ATP-binding proteins (PhnC), two transmembrane proteins (PhnE) and a solute-binding protein (PhnD).

The protein localises to the cell inner membrane. The enzyme catalyses phosphonate(out) + ATP + H2O = phosphonate(in) + ADP + phosphate + H(+). Part of the ABC transporter complex PhnCDE involved in phosphonates import. Responsible for energy coupling to the transport system. This Shigella dysenteriae serotype 1 (strain Sd197) protein is Phosphonates import ATP-binding protein PhnC.